Reading from the N-terminus, the 549-residue chain is Neutral amino acid transporter 9 (549 aa).

The disordered stretch occupies residues 1–27 (MDEDSKPLLGSVPTGDYYTDSLDPKQR). At 1 to 107 (MDEDSKPLLG…GGDSPIKNPS (107 aa)) the chain is on the cytoplasmic side. Residues 108-128 (IVTIFAIWNTMMGTSILSIPW) form a helical membrane-spanning segment. The segment at 117–122 (TMMGTS) is important for arginine binding and amino acid transport. Serine 122 contacts arginine. Residues 129–134 (GIKQAG) lie on the Lumenal side of the membrane. The chain crosses the membrane as a helical span at residues 135-155 (FTLGIIIIVLMGLLTLYCCYR). Residues 156 to 186 (VLKSTKSIPYVDTSDWEFPDVCKYYFGGFGK) lie on the Cytoplasmic side of the membrane. The chain crosses the membrane as a helical span at residues 187–213 (WSSLVFSLVSLIGAMVVYWVLMSNFLF). Over 214–271 (NTGKFIFNYVHNVNTSDAFGTNGTERVICPYPDVDPHGNSSTSLYSGSDNSTGLEFDH) the chain is Lumenal. N-linked (GlcNAc...) asparagine glycans are attached at residues asparagine 227, asparagine 235, asparagine 252, and asparagine 263. A disulfide bond links cysteine 242 and cysteine 412. The helical transmembrane segment at 272–288 (WWSKTNTIPFYLILLLL) threads the bilayer. Residues 289 to 297 (PLLNFRSAS) lie on the Cytoplasmic side of the membrane. Residues 298 to 322 (FFARFTFLGTISVIYLIFLVTYKAI) traverse the membrane as a helical segment. The Lumenal segment spans residues 323 to 344 (QLGFHLEFHWFDSSMFFVPEFR). A helical membrane pass occupies residues 345-365 (TLFPQLSGVLTLAFFIHNCII). The Cytoplasmic segment spans residues 366–382 (TLMKNNKHQENNVRDLS). The helical transmembrane segment at 383–403 (LAYLLVGLTYLYVGVLIFAAF) threads the bilayer. Residues 404–425 (PSPPLSKECIEPNFLDNFPSSD) are Lumenal-facing. A helical transmembrane segment spans residues 426-446 (ILVFVARTFLLFQMTTVYPLL). The short motif at 432-442 (RTFLLFQMTTV) is the CARC motif element. A CRAC motif motif is present at residues 445–451 (LLGYLVR). The Cytoplasmic segment spans residues 447 to 467 (GYLVRVQLMGQIFGNHYPGFL). The helical transmembrane segment at 468 to 488 (HVFVLNVFVVGAGVLMARFYP) threads the bilayer. Over 489–495 (NIGSIIR) the chain is Lumenal. The chain crosses the membrane as a helical span at residues 496 to 516 (YSGALCGLALVFVLPSLIHMV). At 517-528 (SLKRRGELRWTS) the chain is on the cytoplasmic side. Residues 529 to 549 (TLFHGFLILLGVANLLGQFFM) form a helical membrane-spanning segment.

This sequence belongs to the amino acid/polyamine transporter 2 family. SLC38A9 subfamily. In terms of assembly, associated component of the Ragulator complex. Associated component of the Rag GTPases heterodimers (RRAGA and RRAGC). Glycosylated.

Its subcellular location is the lysosome membrane. The protein localises to the late endosome membrane. It catalyses the reaction L-leucine(in) = L-leucine(out). The enzyme catalyses L-tyrosine(in) = L-tyrosine(out). The catalysed reaction is L-glutamine(out) = L-glutamine(in). It carries out the reaction L-asparagine(out) = L-asparagine(in). Its activity is regulated as follows. Amino acid transport activity is increased by sodium. Transport of L-glutamine, leucine and tyrosine is increased by arginine binding. Its function is as follows. Lysosomal amino acid transporter involved in the activation of mTORC1 in response to amino acid levels. Probably acts as an amino acid sensor of the Rag GTPases and Ragulator complexes, 2 complexes involved in amino acid sensing and activation of mTORC1, a signaling complex promoting cell growth in response to growth factors, energy levels, and amino acids. Following activation by amino acids, the Ragulator and Rag GTPases function as a scaffold recruiting mTORC1 to lysosomes where it is in turn activated. SLC38A9 mediates transport of amino acids with low capacity and specificity with a slight preference for polar amino acids. Acts as an arginine sensor. Following activation by arginine binding, mediates transport of L-glutamine, leucine and tyrosine with high efficiency, and is required for the efficient utilization of these amino acids after lysosomal protein degradation. However, the transport mechanism is not well defined and the role of sodium is not clear. Guanine exchange factor (GEF) that, upon arginine binding, stimulates GDP release from RRAGA and therefore activates the Rag GTPase heterodimer and the mTORC1 pathway in response to nutrient sufficiency. The protein is Neutral amino acid transporter 9 of Danio rerio (Zebrafish).